The sequence spans 481 residues: MTCGSGFCGRAFSCASACGPRPGRCCISAAPYRGISCYRGLSGGFGSQSVCGAFRSGSCGRSFGYRSGGICGPSPPCITTVSVNESLLTPLNLEIDPNAQCVKHEEKEQIKCLNSKFAAFIDKVRFLEQQNKLLETKWQFYQNRKCCESNMEPLFEGYIEALRREAECVEADSGRLAAELNHAQESMEGYKKRYEEEVSLRATAENEFVALKKDVDCAYLRKSDLEANAEALTQETDFLRRMYDEETRILHSHISDTSIVVKMDNSRDLNMDCVVAEIKAQYDDIASRSRAEAESWYRTKCEEIKATVIRHGETLRRTREEINELNRMIQRLTAEIENAKCQNTKLEAAVTQSEQQGEAALADARCKLAELEGALQKAKQDMACLLKEYQEVMNSKLGLDVEITTYRRLLEGEEQRLCEGVGAVNVCVSSSRGGVVCGDLCVSGSRPVIGSACSAPCSGNLAVNTGLCAPCGSAVSCGRKC.

The segment at 1–106 (MTCGSGFCGR…PNAQCVKHEE (106 aa)) is head. The IF rod domain occupies 106-417 (EKEQIKCLNS…RLLEGEEQRL (312 aa)). The interval 107–141 (KEQIKCLNSKFAAFIDKVRFLEQQNKLLETKWQFY) is coil 1A. A linker 1 region spans residues 142–151 (QNRKCCESNM). The tract at residues 152 to 252 (EPLFEGYIEA…YDEETRILHS (101 aa)) is coil 1B. K212 is covalently cross-linked (Glycyl lysine isopeptide (Lys-Gly) (interchain with G-Cter in SUMO1)). The interval 253–269 (HISDTSIVVKMDNSRDL) is linker 12. The segment at 270 to 413 (NMDCVVAEIK…TTYRRLLEGE (144 aa)) is coil 2. Positions 414-481 (EQRLCEGVGA…GSAVSCGRKC (68 aa)) are tail.

Belongs to the intermediate filament family. Heterotetramer of two type I and two type II keratins. As to expression, expressed in dorsal skin.

The chain is Keratin, type II cuticular Hb1 from Mus musculus (Mouse).